Here is a 208-residue protein sequence, read N- to C-terminus: Mediator of RNA polymerase II transcription subunit 18 (208 aa).

Ser-66 is modified (phosphoserine).

It belongs to the Mediator complex subunit 18 family. In terms of assembly, component of the Mediator complex, which is composed of MED1, MED4, MED6, MED7, MED8, MED9, MED10, MED11, MED12, MED13, MED13L, MED14, MED15, MED16, MED17, MED18, MED19, MED20, MED21, MED22, MED23, MED24, MED25, MED26, MED27, MED29, MED30, MED31, CCNC, CDK8 and CDC2L6/CDK11. The MED12, MED13, CCNC and CDK8 subunits form a distinct module termed the CDK8 module. Mediator containing the CDK8 module is less active than Mediator lacking this module in supporting transcriptional activation. Individual preparations of the Mediator complex lacking one or more distinct subunits have been variously termed ARC, CRSP, DRIP, PC2, SMCC and TRAP.

The protein localises to the nucleus. Component of the Mediator complex, a coactivator involved in the regulated transcription of nearly all RNA polymerase II-dependent genes. Mediator functions as a bridge to convey information from gene-specific regulatory proteins to the basal RNA polymerase II transcription machinery. Mediator is recruited to promoters by direct interactions with regulatory proteins and serves as a scaffold for the assembly of a functional preinitiation complex with RNA polymerase II and the general transcription factors. The protein is Mediator of RNA polymerase II transcription subunit 18 (Med18) of Mus musculus (Mouse).